Here is a 678-residue protein sequence, read N- to C-terminus: Vacuolar protein sorting-associated protein 1 (678 aa).

The Dynamin-type G domain maps to 24–311 (LIDLPQITVV…LMHHIRNTLP (288 aa)). The G1 motif stretch occupies residues 34–41 (RSQSSGKS). 34–41 (RSQSSGKS) provides a ligand contact to GTP. Residues 60-62 (VTR) form a G2 motif region. The interval 71–96 (NRPSASGKNEETTTDSDGKDQNNSSE) is disordered. The span at 78–90 (KNEETTTDSDGKD) shows a compositional bias: basic and acidic residues. The G3 motif stretch occupies residues 153-156 (DLPG). GTP contacts are provided by residues 153 to 157 (DLPGL) and 222 to 225 (TKVD). Positions 222–225 (TKVD) are G4 motif. A G5 motif region spans residues 252–255 (INRG). Residues 592 to 678 (TEVIKLLIMS…LQASEIVSNV (87 aa)) enclose the GED domain.

Belongs to the TRAFAC class dynamin-like GTPase superfamily. Dynamin/Fzo/YdjA family.

The sequence is that of Vacuolar protein sorting-associated protein 1 (vps1) from Schizosaccharomyces pombe (strain 972 / ATCC 24843) (Fission yeast).